We begin with the raw amino-acid sequence, 501 residues long: Ribose import ATP-binding protein RbsA (501 aa).

2 ABC transporter domains span residues 5–241 (LQLK…VGRK) and 252–495 (APGD…VGKL). ATP is bound at residue 37–44 (GENGAGKS).

The protein belongs to the ABC transporter superfamily. Ribose importer (TC 3.A.1.2.1) family. The complex is composed of an ATP-binding protein (RbsA), two transmembrane proteins (RbsC) and a solute-binding protein (RbsB).

It localises to the cell inner membrane. The enzyme catalyses D-ribose(out) + ATP + H2O = D-ribose(in) + ADP + phosphate + H(+). Part of the ABC transporter complex RbsABC involved in ribose import. Responsible for energy coupling to the transport system. This Escherichia coli (strain K12) protein is Ribose import ATP-binding protein RbsA.